We begin with the raw amino-acid sequence, 620 residues long: Chaperone protein HscA homolog (620 aa).

It belongs to the heat shock protein 70 family.

Its function is as follows. Chaperone involved in the maturation of iron-sulfur cluster-containing proteins. Has a low intrinsic ATPase activity which is markedly stimulated by HscB. The polypeptide is Chaperone protein HscA homolog (Shewanella oneidensis (strain ATCC 700550 / JCM 31522 / CIP 106686 / LMG 19005 / NCIMB 14063 / MR-1)).